Reading from the N-terminus, the 570-residue chain is Urease subunit alpha (570 aa).

Ni(2+) contacts are provided by His137, His139, and Lys220. At Lys220 the chain carries N6-carboxylysine. His222 is a substrate binding site. The Ni(2+) site is built by His249 and His275. His323 (proton donor) is an active-site residue. A Ni(2+)-binding site is contributed by Asp363.

Belongs to the metallo-dependent hydrolases superfamily. Urease alpha subunit family. Heterotrimer of UreA (gamma), UreB (beta) and UreC (alpha) subunits. Three heterotrimers associate to form the active enzyme. The cofactor is Ni cation. Carboxylation allows a single lysine to coordinate two nickel ions.

Its subcellular location is the cytoplasm. It carries out the reaction urea + 2 H2O + H(+) = hydrogencarbonate + 2 NH4(+). It functions in the pathway nitrogen metabolism; urea degradation; CO(2) and NH(3) from urea (urease route): step 1/1. The sequence is that of Urease subunit alpha from Lachnoclostridium phytofermentans (strain ATCC 700394 / DSM 18823 / ISDg) (Clostridium phytofermentans).